Here is a 664-residue protein sequence, read N- to C-terminus: Protein-arginine deiminase type-3 (664 aa).

The protein belongs to the protein arginine deiminase family. Ca(2+) is required as a cofactor. In terms of tissue distribution, hair follicles, and epidermis at very low levels.

The protein resides in the cytoplasm. It catalyses the reaction L-arginyl-[protein] + H2O = L-citrullyl-[protein] + NH4(+). Catalyzes the deimination of arginine residues of proteins. The sequence is that of Protein-arginine deiminase type-3 (PADI3) from Homo sapiens (Human).